The chain runs to 127 residues: Protein yippee-like 4 (127 aa).

The Yippee domain occupies 27 to 124; the sequence is RTYSCVHCRA…IEMSHMVKDN (98 aa). Zn(2+)-binding residues include cysteine 31, cysteine 34, cysteine 87, and cysteine 90. A phosphothreonine mark is found at threonine 92 and threonine 93. Phosphotyrosine is present on tyrosine 98.

This sequence belongs to the yippee family.

It localises to the nucleus. It is found in the nucleolus. The sequence is that of Protein yippee-like 4 (YPEL4) from Chlorocebus aethiops (Green monkey).